A 153-amino-acid chain; its full sequence is Protein-export protein SecB (153 aa).

It belongs to the SecB family. In terms of assembly, homotetramer, a dimer of dimers. One homotetramer interacts with 1 SecA dimer.

Its subcellular location is the cytoplasm. Its function is as follows. One of the proteins required for the normal export of preproteins out of the cell cytoplasm. It is a molecular chaperone that binds to a subset of precursor proteins, maintaining them in a translocation-competent state. It also specifically binds to its receptor SecA. The chain is Protein-export protein SecB from Erwinia tasmaniensis (strain DSM 17950 / CFBP 7177 / CIP 109463 / NCPPB 4357 / Et1/99).